Here is a 212-residue protein sequence, read N- to C-terminus: Lysozyme g-like protein 2 (212 aa).

The signal sequence occupies residues 1 to 19; the sequence is MLSSVVFWGLIALIGTSRG. 2 cysteine pairs are disulfide-bonded: Cys-39–Cys-92 and Cys-53–Cys-61. Glu-105 is an active-site residue.

The protein belongs to the glycosyl hydrolase 23 family. In terms of tissue distribution, strong expression detected in the eye and weak expression in the testis. No expression is observed in any other tissues.

It localises to the secreted. Functionally, may act as a potent antibacterial protein that may play a role in the innate immunity. This chain is Lysozyme g-like protein 2 (LYG2), found in Homo sapiens (Human).